The following is a 495-amino-acid chain: Probable serine/threonine-protein kinase DDB_G0292354 (495 aa).

One can recognise a Protein kinase domain in the interval 16–275; the sequence is WTVVKKIGQG…PNYVFLQTLL (260 aa). ATP is bound by residues 22–30 and Lys-45; that span reads IGQGAFGEI. Asp-136 functions as the Proton acceptor in the catalytic mechanism. A disordered region spans residues 293–469; it reads EVQTNSGASS…NGNGSNSQPI (177 aa). Composition is skewed to low complexity over residues 295–333 and 354–364; these read QTNS…NSSA and NNSNNNNNNNN. The span at 385-395 shows a compositional bias: polar residues; that stretch reads ESNSQIANSSE. The span at 435–466 shows a compositional bias: low complexity; the sequence is SNNNNINNNNNNYNNNNNNNNNSHMNGNGSNS.

The protein belongs to the protein kinase superfamily. CK1 Ser/Thr protein kinase family.

This Dictyostelium discoideum (Social amoeba) protein is Probable serine/threonine-protein kinase DDB_G0292354.